A 718-amino-acid polypeptide reads, in one-letter code: Protein Smaug homolog 1 (718 aa).

Ser-168 is modified (phosphoserine). The segment at 278-310 (ARGPQCLPSDHAPLSPQSSVASSGSGGSEHLED) is disordered. The 74-residue stretch at 323 to 396 (SGMKDVPAWL…LKSLERDIIE (74 aa)) folds into the SAM domain. Disordered regions lie at residues 417–474 (AYGS…LQPH) and 572–601 (NRGFGQSDSLPTAGSMGSGMGRRNPRQYQI). The residue at position 420 (Ser-420) is a Phosphoserine. Thr-424 carries the post-translational modification Phosphothreonine. Residues 453–466 (GATATGATATPSAG) are compositionally biased toward low complexity. Arg-573 bears the Omega-N-methylarginine mark. Ser-580 is subject to Phosphoserine.

Belongs to the SMAUG family.

The protein resides in the cytoplasm. Its subcellular location is the cell projection. It localises to the dendrite. It is found in the synapse. The protein localises to the synaptosome. Its function is as follows. Acts as a translational repressor of SRE-containing messengers. The polypeptide is Protein Smaug homolog 1 (SAMD4A) (Macaca fascicularis (Crab-eating macaque)).